Here is a 499-residue protein sequence, read N- to C-terminus: Interleukin-17 receptor B (499 aa).

The signal sequence occupies residues 1-17; it reads MLLVLLILAASCRSALP. The Extracellular segment spans residues 18–286; that stretch reads REPTIQCGSE…PDDNRRMLGG (269 aa). N-linked (GlcNAc...) asparagine glycosylation is found at N67, N103, N156, and N197. The helical transmembrane segment at 287 to 307 threads the bilayer; sequence WLPLFLVLLVAVWVLAAGIYL. The Cytoplasmic segment spans residues 308 to 499; it reads TWRQGRSTKT…QACHDSCSPL (192 aa). The 147-residue stretch at 328 to 474 folds into the SEFIR domain; sequence LIKVLVVYPS…LMKDATAFHT (147 aa).

In terms of assembly, interacts with DAZAP2. Interacts with TRAF3IP2. Liver and testis. Expressed at lower level in kidney and lung. Expressed in selected T-cell, B-cell and myeloid cell lines.

The protein resides in the cell membrane. It is found in the secreted. Its function is as follows. Receptor for the pro-inflammatory cytokines IL17B and IL17E. May play a role in controlling the growth and/or differentiation of hematopoietic cells. The chain is Interleukin-17 receptor B (Il17rb) from Mus musculus (Mouse).